The chain runs to 200 residues: Histone chaperone asf1a-B (200 aa).

Belongs to the ASF1 family. As to quaternary structure, interacts with histone H3 (including both histone H3.1 and H3.3) and histone H4.

It localises to the nucleus. Histone chaperone that facilitates histone deposition and histone exchange and removal during nucleosome assembly and disassembly. The polypeptide is Histone chaperone asf1a-B (asf1ab) (Xenopus laevis (African clawed frog)).